The primary structure comprises 59 residues: Large ribosomal subunit protein uL30 (59 aa).

It belongs to the universal ribosomal protein uL30 family. As to quaternary structure, part of the 50S ribosomal subunit.

This chain is Large ribosomal subunit protein uL30, found in Clostridium botulinum (strain ATCC 19397 / Type A).